A 387-amino-acid chain; its full sequence is Cysteine desulfurase (387 aa).

Pyridoxal 5'-phosphate contacts are provided by residues 72-73 (GT), Asn152, Gln180, and 200-202 (SAH). The residue at position 203 (Lys203) is an N6-(pyridoxal phosphate)lysine. Thr238 is a binding site for pyridoxal 5'-phosphate. Cys323 serves as the catalytic Cysteine persulfide intermediate. Residue Cys323 participates in [2Fe-2S] cluster binding.

The protein belongs to the class-V pyridoxal-phosphate-dependent aminotransferase family. NifS/IscS subfamily. Homodimer. It depends on pyridoxal 5'-phosphate as a cofactor.

The catalysed reaction is (sulfur carrier)-H + L-cysteine = (sulfur carrier)-SH + L-alanine. Its function is as follows. Catalyzes the removal of elemental sulfur atoms from cysteine to produce alanine. Seems to participate in the biosynthesis of the nitrogenase metalloclusters by providing the inorganic sulfur required for the Fe-S core formation. The polypeptide is Cysteine desulfurase (Cereibacter sphaeroides (Rhodobacter sphaeroides)).